The primary structure comprises 324 residues: MKRHLLSAGDLSRDDAELVLRTAAELRELADRPIKKLPALRGRTVVNLFFEDSTRTRISFEAAAKRLSADVINFAAKGSSLSKGESLKDTALTLEAMGADAVVVRHGASGAPHRLAHSGWVRSSVVNAGDGTHEHPTQALLDAFTMWRHLGQGKEQSLDGRRIAIVGDVLHSRVARSNALLLKTLGAEVTLVAPPTLLPVGIDTWPVETSYDLDAVLPKADAVMMLRVQRERMSGGFFPTAREYSRRYGLDGRRMATLQDHTIVMHPGPMVRGMEITADVADSDRSVIVEQVTNGVAVRMAVLYLLLGGSEPAVSTSSTNEAEE.

The carbamoyl phosphate site is built by arginine 55 and threonine 56. Residue lysine 83 coordinates L-aspartate. Carbamoyl phosphate contacts are provided by arginine 105, histidine 135, and glutamine 138. Residues arginine 173 and arginine 227 each coordinate L-aspartate. Carbamoyl phosphate is bound by residues glycine 268 and proline 269.

Belongs to the aspartate/ornithine carbamoyltransferase superfamily. ATCase family. As to quaternary structure, heterododecamer (2C3:3R2) of six catalytic PyrB chains organized as two trimers (C3), and six regulatory PyrI chains organized as three dimers (R2).

It carries out the reaction carbamoyl phosphate + L-aspartate = N-carbamoyl-L-aspartate + phosphate + H(+). The protein operates within pyrimidine metabolism; UMP biosynthesis via de novo pathway; (S)-dihydroorotate from bicarbonate: step 2/3. Functionally, catalyzes the condensation of carbamoyl phosphate and aspartate to form carbamoyl aspartate and inorganic phosphate, the committed step in the de novo pyrimidine nucleotide biosynthesis pathway. The protein is Aspartate carbamoyltransferase catalytic subunit of Nocardioides sp. (strain ATCC BAA-499 / JS614).